Consider the following 429-residue polypeptide: Enolase (429 aa).

Position 169 (Q169) interacts with (2R)-2-phosphoglycerate. The active-site Proton donor is the E211. Residues D248, E289, and D316 each contribute to the Mg(2+) site. Positions 341, 370, 371, and 392 each coordinate (2R)-2-phosphoglycerate. The Proton acceptor role is filled by K341.

It belongs to the enolase family. Mg(2+) serves as cofactor.

It localises to the cytoplasm. The protein resides in the secreted. The protein localises to the cell surface. It catalyses the reaction (2R)-2-phosphoglycerate = phosphoenolpyruvate + H2O. It functions in the pathway carbohydrate degradation; glycolysis; pyruvate from D-glyceraldehyde 3-phosphate: step 4/5. Catalyzes the reversible conversion of 2-phosphoglycerate (2-PG) into phosphoenolpyruvate (PEP). It is essential for the degradation of carbohydrates via glycolysis. This Anaplasma phagocytophilum (strain HZ) protein is Enolase.